The sequence spans 120 residues: Large ribosomal subunit protein uL18 (120 aa).

Residues methionine 1–glycine 22 form a disordered region. Residues serine 8–glycine 18 show a composition bias toward basic residues.

The protein belongs to the universal ribosomal protein uL18 family. As to quaternary structure, part of the 50S ribosomal subunit; part of the 5S rRNA/L5/L18/L25 subcomplex. Contacts the 5S and 23S rRNAs.

This is one of the proteins that bind and probably mediate the attachment of the 5S RNA into the large ribosomal subunit, where it forms part of the central protuberance. This Nostoc punctiforme (strain ATCC 29133 / PCC 73102) protein is Large ribosomal subunit protein uL18.